The chain runs to 341 residues: Ribosomal RNA small subunit methyltransferase H (341 aa).

S-adenosyl-L-methionine is bound by residues 47 to 49, D64, F91, D109, and Q116; that span reads GGY.

It belongs to the methyltransferase superfamily. RsmH family.

It is found in the cytoplasm. The catalysed reaction is cytidine(1402) in 16S rRNA + S-adenosyl-L-methionine = N(4)-methylcytidine(1402) in 16S rRNA + S-adenosyl-L-homocysteine + H(+). In terms of biological role, specifically methylates the N4 position of cytidine in position 1402 (C1402) of 16S rRNA. In Rhizobium rhizogenes (strain K84 / ATCC BAA-868) (Agrobacterium radiobacter), this protein is Ribosomal RNA small subunit methyltransferase H.